A 765-amino-acid chain; its full sequence is uncharacterized protein (765 aa).

A signal peptide spans 1–22 (MKLKGFLAVGVSVFGFSGLLMA). A lipid anchor (N-palmitoyl cysteine) is attached at C23. C23 carries S-diacylglycerol cysteine lipidation. Disordered regions lie at residues 177 to 203 (EGTPTSTTVQATVSSRSAEKKGTLEIA) and 218 to 255 (TAQNNSNETTKEQKQVKRSSSSSSTTSTTGETKDTTKS). The segment covering 179 to 192 (TPTSTTVQATVSSR) has biased composition (polar residues). Over residues 236-247 (SSSSSSTTSTTG) the composition is skewed to low complexity.

The protein belongs to the MG185/MG260 family.

It is found in the cell membrane. This is an uncharacterized protein from Mycoplasma genitalium (strain ATCC 33530 / DSM 19775 / NCTC 10195 / G37) (Mycoplasmoides genitalium).